The chain runs to 38 residues: MSGPNPNKQPVELNRTSLFWGLLLIFILAVLFSSYFFN.

Residues serine 17–phenylalanine 37 form a helical membrane-spanning segment.

It belongs to the PsbL family. In terms of assembly, PSII is composed of 1 copy each of membrane proteins PsbA, PsbB, PsbC, PsbD, PsbE, PsbF, PsbH, PsbI, PsbJ, PsbK, PsbL, PsbM, PsbT, PsbX, PsbY, PsbZ, Psb30/Ycf12, at least 3 peripheral proteins of the oxygen-evolving complex and a large number of cofactors. It forms dimeric complexes.

The protein resides in the plastid. It is found in the chloroplast thylakoid membrane. One of the components of the core complex of photosystem II (PSII). PSII is a light-driven water:plastoquinone oxidoreductase that uses light energy to abstract electrons from H(2)O, generating O(2) and a proton gradient subsequently used for ATP formation. It consists of a core antenna complex that captures photons, and an electron transfer chain that converts photonic excitation into a charge separation. This subunit is found at the monomer-monomer interface and is required for correct PSII assembly and/or dimerization. This Guillardia theta (Cryptophyte) protein is Photosystem II reaction center protein L.